The primary structure comprises 399 residues: MNIRTLDDLLAEEVTGRRVLVRADLNVPLDKQTGQITDDGRIRAVLPTLGALVQAGAKVVVCSHLGRPKGSPDPAFSLRPVAGRLGELLGAPVHFAEDTVGDSARSTVAGLADGQVALLENLRFNPGETSKDEAQRGAFADQLAALADAYVDDAFGAVHRRHASVYDVPARLPHVAGRLVLREVEVLGTLTGEPDRPYVVVLGGSKVSDKLAVIEALLPKVDRLLVGGGMCFTFLKAQGHEVGSSLLEEEMVETCRSLLERAGGKIMLPVDVVAADAFAPDAPHDTVRADGIPSKRVGLDIGPETVAGFAAALRGARTIFWNGPMGVFEMAAFAHGTCGVAEAIANADAFTVVGGGDSAAAVRALGLDEQAFSHISTGGGASLEYLEGKTLPGIAALEN.

Substrate is bound by residues 24–26 (DLN), Arg-41, 64–67 (HLGR), Arg-123, and Arg-160. ATP-binding positions include Lys-210, Gly-298, Glu-329, and 355-358 (GGDS).

The protein belongs to the phosphoglycerate kinase family. As to quaternary structure, monomer.

It is found in the cytoplasm. It carries out the reaction (2R)-3-phosphoglycerate + ATP = (2R)-3-phospho-glyceroyl phosphate + ADP. The protein operates within carbohydrate degradation; glycolysis; pyruvate from D-glyceraldehyde 3-phosphate: step 2/5. In Salinispora arenicola (strain CNS-205), this protein is Phosphoglycerate kinase.